The following is an 88-amino-acid chain: Small ribosomal subunit protein bS20 (88 aa).

Belongs to the bacterial ribosomal protein bS20 family.

Its function is as follows. Binds directly to 16S ribosomal RNA. In Bradyrhizobium diazoefficiens (strain JCM 10833 / BCRC 13528 / IAM 13628 / NBRC 14792 / USDA 110), this protein is Small ribosomal subunit protein bS20.